Reading from the N-terminus, the 146-residue chain is Hemoglobin subunit beta-1 (146 aa).

The Globin domain occupies 2–146; it reads KWSDKERAVI…VVSALGKQYC (145 aa). Heme b is bound by residues H63 and H92.

Belongs to the globin family. As to quaternary structure, hb1 is a heterotetramer of two alpha-1 chains and two beta-1 chains; Hb2 is a heterotetramer of two alpha-2 chains and two beta-1 chains. As to expression, red blood cells.

Its function is as follows. Involved in oxygen transport from gills to the various peripheral tissues. This Anarhichas minor (Arctic spotted wolffish) protein is Hemoglobin subunit beta-1 (hbb1).